We begin with the raw amino-acid sequence, 62 residues long: uncharacterized protein (62 aa).

It is found in the mitochondrion. This is an uncharacterized protein from Marchantia polymorpha (Common liverwort).